We begin with the raw amino-acid sequence, 181 residues long: Oligoribonuclease (181 aa).

The Exonuclease domain maps to 8-171; sequence LVWIDMEMTG…DDIRESIAEL (164 aa). Tyr129 is a catalytic residue.

It belongs to the oligoribonuclease family.

The protein resides in the cytoplasm. Its function is as follows. 3'-to-5' exoribonuclease specific for small oligoribonucleotides. This is Oligoribonuclease from Aeromonas hydrophila subsp. hydrophila (strain ATCC 7966 / DSM 30187 / BCRC 13018 / CCUG 14551 / JCM 1027 / KCTC 2358 / NCIMB 9240 / NCTC 8049).